A 600-amino-acid polypeptide reads, in one-letter code: E3 ubiquitin-protein ligase RLIM (600 aa).

The residue at position 1 (methionine 1) is an N-acetylmethionine. Residues methionine 1–serine 11 are compositionally biased toward basic and acidic residues. Disordered stretches follow at residues methionine 1–arginine 24, asparagine 49–glycine 355, and serine 417–aspartate 497. 2 stretches are compositionally biased toward polar residues: residues serine 103–serine 131 and isoleucine 140–glutamate 152. Serine 163 bears the Phosphoserine mark. A compositionally biased stretch (polar residues) spans asparagine 166–methionine 175. Residues glutamate 176–proline 187 are compositionally biased toward low complexity. Serine 194, serine 227, and serine 229 each carry phosphoserine. A compositionally biased stretch (basic and acidic residues) spans arginine 213–arginine 228. Residues leucine 244–serine 255 are compositionally biased toward polar residues. A Phosphoserine modification is found at serine 269. Positions serine 288–glycine 306 are enriched in low complexity. Over residues arginine 322–isoleucine 332 the composition is skewed to basic and acidic residues. The segment covering alanine 333–tyrosine 349 has biased composition (polar residues). The segment covering serine 448–serine 475 has biased composition (low complexity). An RING-type zinc finger spans residues cysteine 546–arginine 587. A PDZ-binding motif is present at residues glutamate 597–valine 600.

The protein belongs to the RNF12 family. Interacts (via N-terminus) with TERF1. Interacts (via C-terminus) with ESR1. Interacts with LIM/homeobox factors such as LHX3. Interacts with LDB1, LDB2 and SIN3A. Interacts with LIMK1.

The protein localises to the nucleus. It carries out the reaction S-ubiquitinyl-[E2 ubiquitin-conjugating enzyme]-L-cysteine + [acceptor protein]-L-lysine = [E2 ubiquitin-conjugating enzyme]-L-cysteine + N(6)-ubiquitinyl-[acceptor protein]-L-lysine.. It participates in protein modification; protein ubiquitination. In terms of biological role, E3 ubiquitin-protein ligase that acts as a negative coregulator for LIM homeodomain transcription factors by mediating the ubiquitination and subsequent degradation of LIM cofactors LDB1 and LDB2 and by mediating the recruitment the SIN3a/histone deacetylase corepressor complex. Ubiquitination and degradation of LIM cofactors LDB1 and LDB2 allows DNA-bound LIM homeodomain transcription factors to interact with other protein partners such as RLIM. Plays a role in telomere length-mediated growth suppression by mediating the ubiquitination and degradation of TERF1. By targeting ZFP42 for degradation, acts as an activator of random inactivation of X chromosome in the embryo, a stochastic process in which one X chromosome is inactivated to minimize sex-related dosage differences of X-encoded genes in somatic cells of female placental mammals. This chain is E3 ubiquitin-protein ligase RLIM (Rlim), found in Mus musculus (Mouse).